A 206-amino-acid polypeptide reads, in one-letter code: MIGKLKGVLDEIGEDHCVVDVGGVGYVAHCSARSLSTLGSVGTPVTLFIETYVREDMIRLYGFRTVLEREWFRLLQNNVQGVGAKVALSVLSTLTPSELANAIALRDIATVARAPGVGRKVAERIVTELKSKAPAFAGEAAGAIGLKQDLGEGVAPAPVSDAVSALANLGYSRDIAANAVAAALKSAGEGADTGTLIRLGLKELAR.

The domain I stretch occupies residues 1 to 64 (MIGKLKGVLD…EDMIRLYGFR (64 aa)). Residues 65 to 144 (TVLEREWFRL…AFAGEAAGAI (80 aa)) are domain II. Residues 145–154 (GLKQDLGEGV) are flexible linker. Residues 154 to 206 (VAPAPVSDAVSALANLGYSRDIAANAVAAALKSAGEGADTGTLIRLGLKELAR) form a domain III region.

Belongs to the RuvA family. Homotetramer. Forms an RuvA(8)-RuvB(12)-Holliday junction (HJ) complex. HJ DNA is sandwiched between 2 RuvA tetramers; dsDNA enters through RuvA and exits via RuvB. An RuvB hexamer assembles on each DNA strand where it exits the tetramer. Each RuvB hexamer is contacted by two RuvA subunits (via domain III) on 2 adjacent RuvB subunits; this complex drives branch migration. In the full resolvosome a probable DNA-RuvA(4)-RuvB(12)-RuvC(2) complex forms which resolves the HJ.

It localises to the cytoplasm. Functionally, the RuvA-RuvB-RuvC complex processes Holliday junction (HJ) DNA during genetic recombination and DNA repair, while the RuvA-RuvB complex plays an important role in the rescue of blocked DNA replication forks via replication fork reversal (RFR). RuvA specifically binds to HJ cruciform DNA, conferring on it an open structure. The RuvB hexamer acts as an ATP-dependent pump, pulling dsDNA into and through the RuvAB complex. HJ branch migration allows RuvC to scan DNA until it finds its consensus sequence, where it cleaves and resolves the cruciform DNA. The chain is Holliday junction branch migration complex subunit RuvA from Chelativorans sp. (strain BNC1).